A 470-amino-acid polypeptide reads, in one-letter code: Cysteine--tRNA ligase (470 aa).

C46 lines the Zn(2+) pocket. Positions 48–58 match the 'HIGH' region motif; sequence PTVYDLAHIGN. Residues C230, H255, and E259 each coordinate Zn(2+). The short motif at 288–292 is the 'KMSKS' region element; it reads KMSKS. K291 contacts ATP.

It belongs to the class-I aminoacyl-tRNA synthetase family. As to quaternary structure, monomer. Zn(2+) is required as a cofactor.

It localises to the cytoplasm. The enzyme catalyses tRNA(Cys) + L-cysteine + ATP = L-cysteinyl-tRNA(Cys) + AMP + diphosphate. The protein is Cysteine--tRNA ligase of Granulibacter bethesdensis (strain ATCC BAA-1260 / CGDNIH1).